A 432-amino-acid chain; its full sequence is Putative D-alanyl-D-alanine carboxypeptidase (432 aa).

A helical; Signal-anchor membrane pass occupies residues 7–25 (ATVLLTFSLSAFAVEYPVL).

This sequence belongs to the peptidase S12 family. YfeW subfamily.

The protein resides in the cell inner membrane. It carries out the reaction Preferential cleavage: (Ac)2-L-Lys-D-Ala-|-D-Ala. Also transpeptidation of peptidyl-alanyl moieties that are N-acyl substituents of D-alanine.. This Salmonella typhi protein is Putative D-alanyl-D-alanine carboxypeptidase.